A 313-amino-acid polypeptide reads, in one-letter code: Ribosomal RNA small subunit methyltransferase H (313 aa).

S-adenosyl-L-methionine contacts are provided by residues 35–37 (GGH), Asp-55, Phe-79, Asp-101, and Gln-108.

It belongs to the methyltransferase superfamily. RsmH family.

The protein localises to the cytoplasm. The enzyme catalyses cytidine(1402) in 16S rRNA + S-adenosyl-L-methionine = N(4)-methylcytidine(1402) in 16S rRNA + S-adenosyl-L-homocysteine + H(+). Functionally, specifically methylates the N4 position of cytidine in position 1402 (C1402) of 16S rRNA. The protein is Ribosomal RNA small subunit methyltransferase H of Edwardsiella ictaluri (strain 93-146).